The following is a 164-amino-acid chain: DNA-directed RNA polymerase 19 kDa subunit (164 aa).

A compositionally biased stretch (acidic residues) spans M1 to D35. Positions M1–K39 are disordered.

This sequence belongs to the poxviridae DNA-directed RNA polymerase 19 kDa subunit family. The DNA-dependent RNA polymerase used for intermediate and late genes expression consists of eight subunits Rpo30/OPG66, Rpo7/OPG90, Rpo22/OPG103, Rpo147/OPG105, Rpo18/OPG119, Rpo19/OPG131, Rpo132/OPG151 and Rpo35/OPG156. The same holoenzyme, with the addition of the transcription-specificity factor OPG109, is used for early gene expression.

The protein resides in the virion. It catalyses the reaction RNA(n) + a ribonucleoside 5'-triphosphate = RNA(n+1) + diphosphate. In terms of biological role, part of the DNA-dependent RNA polymerase which catalyzes the transcription of viral DNA into RNA using the four ribonucleoside triphosphates as substrates. Responsible for the transcription of early, intermediate and late genes. DNA-dependent RNA polymerase associates with the early transcription factor (ETF), itself composed of OPG118 and OPG133, thereby allowing the early genes transcription. Late transcription, and probably also intermediate transcription, require newly synthesized RNA polymerase. The sequence is that of DNA-directed RNA polymerase 19 kDa subunit (OPG131) from Variola virus (isolate Human/India/Ind3/1967) (VARV).